Consider the following 427-residue polypeptide: Enolase (427 aa).

Residue Gln-163 coordinates (2R)-2-phosphoglycerate. Catalysis depends on Glu-205, which acts as the Proton donor. Mg(2+) is bound by residues Asp-242, Glu-285, and Asp-312. 4 residues coordinate (2R)-2-phosphoglycerate: Lys-337, Arg-366, Ser-367, and Lys-388. Lys-337 functions as the Proton acceptor in the catalytic mechanism.

This sequence belongs to the enolase family. The cofactor is Mg(2+).

It localises to the cytoplasm. Its subcellular location is the secreted. It is found in the cell surface. The enzyme catalyses (2R)-2-phosphoglycerate = phosphoenolpyruvate + H2O. It participates in carbohydrate degradation; glycolysis; pyruvate from D-glyceraldehyde 3-phosphate: step 4/5. In terms of biological role, catalyzes the reversible conversion of 2-phosphoglycerate (2-PG) into phosphoenolpyruvate (PEP). It is essential for the degradation of carbohydrates via glycolysis. The polypeptide is Enolase (Paraburkholderia xenovorans (strain LB400)).